We begin with the raw amino-acid sequence, 294 residues long: tRNA pseudouridine synthase B (294 aa).

Catalysis depends on Asp-40, which acts as the Nucleophile.

It belongs to the pseudouridine synthase TruB family. Type 1 subfamily.

It carries out the reaction uridine(55) in tRNA = pseudouridine(55) in tRNA. Its function is as follows. Responsible for synthesis of pseudouridine from uracil-55 in the psi GC loop of transfer RNAs. This Synechococcus elongatus (strain ATCC 33912 / PCC 7942 / FACHB-805) (Anacystis nidulans R2) protein is tRNA pseudouridine synthase B.